Consider the following 156-residue polypeptide: Small ribosomal subunit protein uS7 (156 aa).

The protein belongs to the universal ribosomal protein uS7 family. As to quaternary structure, part of the 30S ribosomal subunit. Contacts proteins S9 and S11.

Its function is as follows. One of the primary rRNA binding proteins, it binds directly to 16S rRNA where it nucleates assembly of the head domain of the 30S subunit. Is located at the subunit interface close to the decoding center, probably blocks exit of the E-site tRNA. The protein is Small ribosomal subunit protein uS7 of Streptococcus agalactiae serotype Ia (strain ATCC 27591 / A909 / CDC SS700).